A 1502-amino-acid chain; its full sequence is Nucleoporin NUP170 (1502 aa).

Residues 1 to 31 (MFQSFFHNNGPAAAGETFSDSRSYPLTNHQE) are disordered. Residues 18–30 (FSDSRSYPLTNHQ) are compositionally biased toward polar residues. The segment at 233 to 261 (LISTTMELFMFAISLDKATNELSVFNTHL) is leucine-zipper. S1247 carries the phosphoserine modification.

Belongs to the non-repetitive/WGA-negative nucleoporin family. In terms of assembly, component of the nuclear pore complex (NPC). NPC constitutes the exclusive means of nucleocytoplasmic transport. NPCs allow the passive diffusion of ions and small molecules and the active, nuclear transport receptor-mediated bidirectional transport of macromolecules such as proteins, RNAs, ribonucleoparticles (RNPs), and ribosomal subunits across the nuclear envelope. Due to its 8-fold rotational symmetry, all subunits are present with 8 copies or multiples thereof. During mitosis NUP53 changes its binding partner within the NPC from NUP170 to NIC96, exposing a high affinity binding site for the karyopherin PSE1, and retaining it in the NPC.

It is found in the nucleus. Its subcellular location is the nuclear pore complex. The protein resides in the nucleus membrane. Functionally, functions as a component of the nuclear pore complex (NPC). NPC components, collectively referred to as nucleoporins (NUPs), can play the role of both NPC structural components and of docking or interaction partners for transiently associated nuclear transport factors. NUP170 probably plays an important role in NPC assembly and organization. In addition it is required for chromosome transmission fidelity. In Saccharomyces cerevisiae (strain ATCC 204508 / S288c) (Baker's yeast), this protein is Nucleoporin NUP170 (NUP170).